Here is a 288-residue protein sequence, read N- to C-terminus: ATP synthase gamma chain (288 aa).

Belongs to the ATPase gamma chain family. As to quaternary structure, F-type ATPases have 2 components, CF(1) - the catalytic core - and CF(0) - the membrane proton channel. CF(1) has five subunits: alpha(3), beta(3), gamma(1), delta(1), epsilon(1). CF(0) has three main subunits: a, b and c.

The protein resides in the cell inner membrane. In terms of biological role, produces ATP from ADP in the presence of a proton gradient across the membrane. The gamma chain is believed to be important in regulating ATPase activity and the flow of protons through the CF(0) complex. This chain is ATP synthase gamma chain, found in Chromobacterium violaceum (strain ATCC 12472 / DSM 30191 / JCM 1249 / CCUG 213 / NBRC 12614 / NCIMB 9131 / NCTC 9757 / MK).